A 183-amino-acid chain; its full sequence is Large ribosomal subunit protein uL6 (183 aa).

The protein belongs to the universal ribosomal protein uL6 family. Part of the 50S ribosomal subunit.

Its function is as follows. This protein binds to the 23S rRNA, and is important in its secondary structure. It is located near the subunit interface in the base of the L7/L12 stalk, and near the tRNA binding site of the peptidyltransferase center. The polypeptide is Large ribosomal subunit protein uL6 (Chlamydia felis (strain Fe/C-56) (Chlamydophila felis)).